A 1337-amino-acid chain; its full sequence is DNA-directed RNA polymerase subunit beta' (1337 aa).

Zn(2+) contacts are provided by Cys60, Cys62, Cys75, and Cys78. Asp536, Asp538, and Asp540 together coordinate Mg(2+). The Zn(2+) site is built by Cys895, Cys974, Cys981, and Cys984.

Belongs to the RNA polymerase beta' chain family. As to quaternary structure, the RNAP catalytic core consists of 2 alpha, 1 beta, 1 beta' and 1 omega subunit. When a sigma factor is associated with the core the holoenzyme is formed, which can initiate transcription. The cofactor is Mg(2+). Zn(2+) serves as cofactor.

The catalysed reaction is RNA(n) + a ribonucleoside 5'-triphosphate = RNA(n+1) + diphosphate. In terms of biological role, DNA-dependent RNA polymerase catalyzes the transcription of DNA into RNA using the four ribonucleoside triphosphates as substrates. The protein is DNA-directed RNA polymerase subunit beta' of Bifidobacterium adolescentis (strain ATCC 15703 / DSM 20083 / NCTC 11814 / E194a).